A 531-amino-acid polypeptide reads, in one-letter code: GPI alpha-1,2-mannosyltransferase 3 (531 aa).

Asn-84 carries N-linked (GlcNAc...) asparagine glycosylation. The next 3 helical transmembrane spans lie at 99-119 (GLRG…LYLL), 124-144 (VWFL…IADV), and 174-196 (YCAT…LYYY). Asn-204 is a glycosylation site (N-linked (GlcNAc...) asparagine). 6 helical membrane passes run 210-230 (LICV…WIPL), 249-269 (YLPI…IFFG), 303-323 (GVPV…MVTP), 328-348 (ILLV…HKEF), 350-370 (FIYP…SNLK), and 375-395 (AAVG…GLIH). N-linked (GlcNAc...) asparagine glycosylation is found at Asn-414 and Asn-476.

The protein belongs to the glycosyltransferase 22 family. PIGB subfamily.

The protein localises to the endoplasmic reticulum membrane. It functions in the pathway glycolipid biosynthesis; glycosylphosphatidylinositol-anchor biosynthesis. Its function is as follows. Alpha-1,2-mannosyltransferase that catalyzes the transfer of the third mannose, via an alpha-1,2 bond, from a dolichol-phosphate-mannose (Dol-P-Man) to an alpha-D-Man-(1-&gt;6)-2-PEtn-alpha-D-Man-(1-&gt;4)-alpha-D-GlcN-(1-&gt;6)-(1-radyl,2-acyl-sn-glycero-3-phospho)-2-acyl-inositol intermediate to generate an alpha-D-Man-(1-&gt;2)-alpha-D-Man-(1-&gt;6)-2-PEtn-alpha-D-Man-(1-&gt;4)-alpha-D-GlcN-(1-&gt;6)-(1-radyl,2-acyl-sn-glycero-3-phospho)-2-acyl-inositol (also termed H6) and participates in the nineth step of the glycosylphosphatidylinositol-anchor biosynthesis. May also add the third mannose to an alpha-D-Man-(1-&gt;6)-alpha-D-Man-(1-&gt;4)-alpha-D-GlcN-(1-&gt;6)-(1-radyl,2-acyl-sn-glycero-3-phospho)-2-acyl-inositol (also termed H3) intermediate generating an alpha-D-Man-(1-&gt;2)-alpha-D-Man-(1-&gt;6)-alpha-D-Man-(1-&gt;4)-alpha-D-GlcN-(1-&gt;6)-(1-radyl,2-acyl-sn-glycero-3-phospho)-2-acyl-inositol (also termed H4). The polypeptide is GPI alpha-1,2-mannosyltransferase 3 (Xenopus laevis (African clawed frog)).